A 127-amino-acid chain; its full sequence is Large ribosomal subunit protein bL20 (127 aa).

Belongs to the bacterial ribosomal protein bL20 family.

In terms of biological role, binds directly to 23S ribosomal RNA and is necessary for the in vitro assembly process of the 50S ribosomal subunit. It is not involved in the protein synthesizing functions of that subunit. This is Large ribosomal subunit protein bL20 from Streptomyces griseus subsp. griseus (strain JCM 4626 / CBS 651.72 / NBRC 13350 / KCC S-0626 / ISP 5235).